Here is an 89-residue protein sequence, read N- to C-terminus: Terminase, small subunit gp18 (89 aa).

The interval 1–48 is helix-turn-helix (HTH); the sequence is MEKDKSLITFLEMLDTAMAQRMLADLSDHERRSPQLYNAINKLLDRHK.

Belongs to the terminase small subunit family. Homooctamer. Interacts with the terminase large subunit gp19; the active complex is probably heterooligomeric.

In terms of biological role, plays a role in packaging a single copy of genome into the prohead. The terminase is composed of two subunits (a large and a small) and the small subunit recognizes a specific sequence in the viral DNA. Once the DNA is packaged, the terminase detaches from the connector and the tail replaces it to finish maturation of the virion. Packaging initiates by TerS recognizing the packaging sequence in the viral DNA. The nuclease activity of TerL cuts the viral DNA and the terminase-DNA complex binds to the portal of a procapsid shell. DNA is translocated into the capsid, powered by the packaging ATPase in TerL, which continues until the next site is encountered at which point the motor stops and again cuts the DNA to release the nucleocapsid filled with a unit-length genome ('unit length' packaging). Direct short terminal repeats at each end of the genome are duplicated in concert with packaging. This is Terminase, small subunit gp18 from Escherichia coli (Bacteriophage T7).